A 624-amino-acid chain; its full sequence is Galactan 5-O-arabinofuranosyltransferase (624 aa).

Helical transmembrane passes span 5-25, 43-63, 73-93, 127-147, 159-179, 181-201, 203-223, 234-254, 280-300, 326-346, 355-375, 391-411, and 422-442; these read VLGQ…VAIA, ALTT…GLLW, LGAL…PLGA, IGLP…IAAA, WSIV…AAMI, FEYA…YAST, PYAA…WAGL, AIVG…LLLV, LAVI…PYLL, FPMF…VWLV, AGAL…SMLT, LTVL…LAIA, and VVAA…QDIP.

The protein belongs to the glycosyltransferase 85 family.

The protein localises to the cell membrane. It catalyses the reaction Adds an alpha-D-arabinofuranosyl group from trans,octacis-decaprenylphospho-beta-D-arabinofuranose at the 5-O-position of the eighth, tenth and twelfth galactofuranose unit of the galactofuranan chain of [beta-D-galactofuranosyl-(1-&gt;5)-beta-D-galactofuranosyl-(1-&gt;6)]14-beta-D-galactofuranosyl-(1-&gt;5)-beta-D-galactofuranosyl-(1-&gt;4)-alpha-L-rhamnopyranosyl-(1-&gt;3)-N-acetyl-alpha-D-glucosaminyl-diphospho-trans,octacis-decaprenol.. It participates in cell wall biogenesis; cell wall polysaccharide biosynthesis. Its function is as follows. Involved in the biosynthesis of the arabinogalactan (AG) region of the mycolylarabinogalactan-peptidoglycan (mAGP) complex, an essential component of the mycobacterial cell wall. Catalyzes the addition of the first key arabinofuranosyl (Araf) residue from the sugar donor decaprenyl-phospho-arabinose (DPA) on the C-5 of a 6-linked galactofuranosyl (Galf) of the galactan domain, thus 'priming' the galactan for further elaboration by other arabinofuranosyltransferases. It is not able to add an Araf residue to a terminal Galf. This chain is Galactan 5-O-arabinofuranosyltransferase, found in Mycolicibacterium smegmatis (strain ATCC 700084 / mc(2)155) (Mycobacterium smegmatis).